A 726-amino-acid chain; its full sequence is Dipeptidyl-peptidase 5 (726 aa).

The signal sequence occupies residues 1–19; the sequence is MAPAKWLIASLAFASTGLA. Residues N96 and N252 are each glycosylated (N-linked (GlcNAc...) asparagine). A disordered region spans residues 268-292; the sequence is VAEPINKRNGPRTPHGIEGASSSPV. N485 carries an N-linked (GlcNAc...) asparagine glycan. The active-site Charge relay system is S558. Residue N605 is glycosylated (N-linked (GlcNAc...) asparagine). Residues D641 and H673 each act as charge relay system in the active site. N-linked (GlcNAc...) asparagine glycosylation occurs at N699.

The protein belongs to the peptidase S9C family.

The protein localises to the secreted. Its function is as follows. Extracellular dipeptidyl-peptidase which removes N-terminal dipeptides sequentially from polypeptides having unsubstituted N-termini. Contributes to pathogenicity. The polypeptide is Dipeptidyl-peptidase 5 (DPP5) (Arthroderma otae (strain ATCC MYA-4605 / CBS 113480) (Microsporum canis)).